We begin with the raw amino-acid sequence, 198 residues long: Ribonuclease HII (198 aa).

Residues 10–198 (HLVAGVDEVG…PVKRALGLVC (189 aa)) enclose the RNase H type-2 domain. The a divalent metal cation site is built by D16, E17, and D108.

Belongs to the RNase HII family. Mn(2+) is required as a cofactor. Requires Mg(2+) as cofactor.

Its subcellular location is the cytoplasm. The enzyme catalyses Endonucleolytic cleavage to 5'-phosphomonoester.. In terms of biological role, endonuclease that specifically degrades the RNA of RNA-DNA hybrids. This chain is Ribonuclease HII, found in Enterobacter sp. (strain 638).